The chain runs to 430 residues: Enolase (430 aa).

Q165 lines the (2R)-2-phosphoglycerate pocket. Residue E207 is the Proton donor of the active site. Residues D244, E287, and D314 each coordinate Mg(2+). K339, R368, S369, and K390 together coordinate (2R)-2-phosphoglycerate. K339 serves as the catalytic Proton acceptor.

The protein belongs to the enolase family. In terms of assembly, component of the RNA degradosome, a multiprotein complex involved in RNA processing and mRNA degradation. Mg(2+) is required as a cofactor.

The protein resides in the cytoplasm. It is found in the secreted. Its subcellular location is the cell surface. It carries out the reaction (2R)-2-phosphoglycerate = phosphoenolpyruvate + H2O. Its pathway is carbohydrate degradation; glycolysis; pyruvate from D-glyceraldehyde 3-phosphate: step 4/5. Its function is as follows. Catalyzes the reversible conversion of 2-phosphoglycerate (2-PG) into phosphoenolpyruvate (PEP). It is essential for the degradation of carbohydrates via glycolysis. This Xylella fastidiosa (strain 9a5c) protein is Enolase.